A 300-amino-acid polypeptide reads, in one-letter code: Protein phosphatase 2C 1 (300 aa).

The PPM-type phosphatase domain maps to 23 to 298; sequence IFAASEMQGW…DNMTTILVYL (276 aa). D57, G58, D237, and D289 together coordinate Mn(2+).

This sequence belongs to the PP2C family. Mg(2+) is required as a cofactor. The cofactor is Mn(2+). Post-translationally, the N-terminus is blocked.

Its subcellular location is the membrane. The enzyme catalyses O-phospho-L-seryl-[protein] + H2O = L-seryl-[protein] + phosphate. It catalyses the reaction O-phospho-L-threonyl-[protein] + H2O = L-threonyl-[protein] + phosphate. In terms of biological role, serine and threonine phosphatase. The chain is Protein phosphatase 2C 1 from Paramecium tetraurelia.